Here is a 294-residue protein sequence, read N- to C-terminus: Survival motor neuron protein (294 aa).

Residues 1–10 (MAMSSGGSGS) show a composition bias toward gly residues. The tract at residues 1 to 32 (MAMSSGGSGSGVPEQEDAVLFRRGTGQSDDSD) is disordered. At A2 the chain carries N-acetylalanine. A phosphoserine; by PKA mark is found at S4, S5, and S8. Residues 13 to 44 (PEQEDAVLFRRGTGQSDDSDIWDDTALIKAYD) are P1 (binding site for GEMIN2). T25 carries the phosphothreonine modification. Phosphoserine occurs at positions 28 and 31. K51 participates in a covalent cross-link: Glycyl lysine isopeptide (Lys-Gly) (interchain with G-Cter in SUMO2). The interval 60-88 (CETSGKSKTTPKRKPAKKNKSQKKNTAAS) is disordered. The segment covering 68 to 82 (TTPKRKPAKKNKSQK) has biased composition (basic residues). At T69 the chain carries Phosphothreonine. Position 85 is a phosphothreonine; by PKA (T85). The region spanning 91–151 (QWKVGDKCSA…LSPICEVANN (61 aa)) is the Tudor domain. A required for interaction with RPP20/POP7 region spans residues 97–209 (KCSAIWSEDG…MPGPRLGPGK (113 aa)). The segment covering 156–166 (AQENENESQVS) has biased composition (low complexity). The tract at residues 156–222 (AQENENESQV…KFNGPPPPPP (67 aa)) is disordered. A Phosphoserine; by PKA modification is found at S187. A compositionally biased stretch (pro residues) spans 194-204 (LPPPPPMPGPR). Residues 206–215 (GPGKPGLKFN) show a composition bias toward low complexity. A Glycyl lysine isopeptide (Lys-Gly) (interchain with G-Cter in SUMO2) cross-link involves residue K209. Residues 240-267 (PPIIPPPPPICPDSLDDADALGSMLISW) are P2 (binding site for SM B). Residues 279 to 294 (GFRQNQKEGRCSHSLN) are required for interaction with SYNCRIP.

The protein belongs to the SMN family. In terms of assembly, homooligomer; may form higher order homooligomers in the dimer to octamer range. Part of the core SMN complex that contains SMN1, GEMIN2/SIP1, DDX20/GEMIN3, GEMIN4, GEMIN5, GEMIN6, GEMIN7, GEMIN8 and STRAP/UNRIP. Part of the SMN-Sm complex that contains SMN1, GEMIN2/SIP1, DDX20/GEMIN3, GEMIN4, GEMIN5, GEMIN6, GEMIN7, GEMIN8, STRAP/UNRIP and the Sm proteins SNRPB, SNRPD1, SNRPD2, SNRPD3, SNRPE, SNRPF and SNRPG. Component of an import snRNP complex composed of KPNB1, RNUT1, SMN1 and ZNF259. Interacts with DDX20, FBL, NOLA1, RNUT1, SYNCRIP and with several spliceosomal snRNP core Sm proteins, including SNRPB, SNRPD1, SNRPD2, SNRPD3, SNRPE and ILF3. Interacts with GEMIN2; the interaction is direct. Interacts with GEMIN3; the interaction is direct. Interacts with GEMIN8; the interaction is direct. Interacts with SNRPB; the interaction is direct. Interacts (via Tudor domain) with SNRPD1 (via C-terminus); the interaction is direct. Interacts with SNRPD2; the interaction is direct. Interacts (via Tudor domain) with SNRPD3 (via C-terminus); the interaction is direct. Interacts with SNRPE; the interaction is direct. Interacts with OSTF1, LSM10, LSM11 and RPP20/POP7. Interacts (via C-terminal region) with ZPR1 (via C-terminal region). Interacts (via Tudor domain) with COIL. Interacts with SETX; recruits SETX to POLR2A. Interacts with POLR2A (via the C-terminal domain (CTD)). Interacts with PRMT5. Interacts with XRN2. Interacts (via C-terminus) with FMR1 (via C-terminus); the interaction is direct and occurs in a RNA-independent manner. Interacts (via Tudor domain) with SF3B2 ('Arg-508'-methylated form). Interacts with WRAP53/TCAB1. Interacts (via Tudor domain) with ELAVL4 in an RNA-independent manner; the interaction is required for localization of ELAVL4 to RNA granules. Interacts with FRG1.

Its subcellular location is the nucleus. It is found in the gem. The protein localises to the cajal body. It localises to the cytoplasm. The protein resides in the cytoplasmic granule. Its subcellular location is the perikaryon. It is found in the cell projection. The protein localises to the neuron projection. It localises to the axon. The protein resides in the myofibril. Its subcellular location is the sarcomere. It is found in the z line. Functionally, the SMN complex catalyzes the assembly of small nuclear ribonucleoproteins (snRNPs), the building blocks of the spliceosome, and thereby plays an important role in the splicing of cellular pre-mRNAs. Most spliceosomal snRNPs contain a common set of Sm proteins SNRPB, SNRPD1, SNRPD2, SNRPD3, SNRPE, SNRPF and SNRPG that assemble in a heptameric protein ring on the Sm site of the small nuclear RNA to form the core snRNP (Sm core). In the cytosol, the Sm proteins SNRPD1, SNRPD2, SNRPE, SNRPF and SNRPG are trapped in an inactive 6S pICln-Sm complex by the chaperone CLNS1A that controls the assembly of the core snRNP. To assemble core snRNPs, the SMN complex accepts the trapped 5Sm proteins from CLNS1A forming an intermediate. Binding of snRNA inside 5Sm ultimately triggers eviction of the SMN complex, thereby allowing binding of SNRPD3 and SNRPB to complete assembly of the core snRNP. Within the SMN complex, SMN1 acts as a structural backbone and together with GEMIN2 it gathers the Sm complex subunits. Ensures the correct splicing of U12 intron-containing genes that may be important for normal motor and proprioceptive neurons development. Also required for resolving RNA-DNA hybrids created by RNA polymerase II, that form R-loop in transcription terminal regions, an important step in proper transcription termination. May also play a role in the metabolism of small nucleolar ribonucleoprotein (snoRNPs). The protein is Survival motor neuron protein (SMN1) of Pongo abelii (Sumatran orangutan).